A 658-amino-acid chain; its full sequence is Integrator complex subunit 9 (658 aa).

The tract at residues 550 to 574 (KHVLQLPPKPPQPPTSKKRKRVSDD) is disordered. Residues 566-570 (KKRKR) carry the Nuclear localization signal motif.

The protein belongs to the metallo-beta-lactamase superfamily. RNA-metabolizing metallo-beta-lactamase-like family. INTS9 subfamily. Component of the Integrator complex, composed of core subunits INTS1, INTS2, INTS3, INTS4, INTS5, INTS6, INTS7, INTS8, INTS9/RC74, INTS10, INTS11/CPSF3L, INTS12, INTS13, INTS14 and INTS15. The core complex associates with protein phosphatase 2A subunits PPP2CA and PPP2R1A, to form the Integrator-PP2A (INTAC) complex. INTS9 is part of the RNA endonuclease subcomplex, composed of INTS4, INTS9, INTS11 and inositol hexakisphosphate (InsP6).

Its subcellular location is the nucleus. The protein resides in the cytoplasm. Functionally, component of the integrator complex, a multiprotein complex that terminates RNA polymerase II (Pol II) transcription in the promoter-proximal region of genes. The integrator complex provides a quality checkpoint during transcription elongation by driving premature transcription termination of transcripts that are unfavorably configured for transcriptional elongation: the complex terminates transcription by (1) catalyzing dephosphorylation of the C-terminal domain (CTD) of Pol II subunit POLR2A/RPB1 and SUPT5H/SPT5, (2) degrading the exiting nascent RNA transcript via endonuclease activity and (3) promoting the release of Pol II from bound DNA. The integrator complex is also involved in terminating the synthesis of non-coding Pol II transcripts, such as enhancer RNAs (eRNAs), small nuclear RNAs (snRNAs), telomerase RNAs and long non-coding RNAs (lncRNAs). The polypeptide is Integrator complex subunit 9 (INTS9) (Gallus gallus (Chicken)).